A 143-amino-acid polypeptide reads, in one-letter code: Putative pre-16S rRNA nuclease (143 aa).

Belongs to the YqgF nuclease family.

The protein localises to the cytoplasm. Functionally, could be a nuclease involved in processing of the 5'-end of pre-16S rRNA. This Crocosphaera subtropica (strain ATCC 51142 / BH68) (Cyanothece sp. (strain ATCC 51142)) protein is Putative pre-16S rRNA nuclease.